Reading from the N-terminus, the 140-residue chain is Large ribosomal subunit protein uL11 (140 aa).

The protein belongs to the universal ribosomal protein uL11 family. As to quaternary structure, part of the ribosomal stalk of the 50S ribosomal subunit. Interacts with L10 and the large rRNA to form the base of the stalk. L10 forms an elongated spine to which L12 dimers bind in a sequential fashion forming a multimeric L10(L12)X complex. One or more lysine residues are methylated.

Its function is as follows. Forms part of the ribosomal stalk which helps the ribosome interact with GTP-bound translation factors. This Symbiobacterium thermophilum (strain DSM 24528 / JCM 14929 / IAM 14863 / T) protein is Large ribosomal subunit protein uL11.